The primary structure comprises 152 residues: SsrA-binding protein (152 aa).

This sequence belongs to the SmpB family.

The protein resides in the cytoplasm. Its function is as follows. Required for rescue of stalled ribosomes mediated by trans-translation. Binds to transfer-messenger RNA (tmRNA), required for stable association of tmRNA with ribosomes. tmRNA and SmpB together mimic tRNA shape, replacing the anticodon stem-loop with SmpB. tmRNA is encoded by the ssrA gene; the 2 termini fold to resemble tRNA(Ala) and it encodes a 'tag peptide', a short internal open reading frame. During trans-translation Ala-aminoacylated tmRNA acts like a tRNA, entering the A-site of stalled ribosomes, displacing the stalled mRNA. The ribosome then switches to translate the ORF on the tmRNA; the nascent peptide is terminated with the 'tag peptide' encoded by the tmRNA and targeted for degradation. The ribosome is freed to recommence translation, which seems to be the essential function of trans-translation. This is SsrA-binding protein from Rickettsia bellii (strain RML369-C).